A 132-amino-acid polypeptide reads, in one-letter code: Major pollen allergen Art v 1 (132 aa).

The N-terminal stretch at 1–24 (MAKCSYVFCAVLLIFIVAIGEMEA) is a signal peptide. The tract at residues 28–77 (KLCEKTSKTYSGKCDNKKCDKKCIEWEKAQHGACHKREAGKESCFCYFDC) is defensin-like domain. 4 cysteine pairs are disulfide-bonded: C30–C77, C41–C61, C46–C71, and C50–C73. Epitope recognized by IgE antibodies of mugwort pollen-sensitized patients regions lie at residues 64 to 70 (REAGKES) and 79 to 87 (KSPPGATPA). Residues 81 to 132 (PPGATPAPPGAAPPPAAGGSPSPPADGGSPPPPADGGSPPVDGGSPPPPSTH) form a disordered region. Residues 83-114 (GATPAPPGAAPPPAAGGSPSPPADGGSPPPPA) show a composition bias toward pro residues. The span at 115–124 (DGGSPPVDGG) shows a compositional bias: low complexity.

This sequence in the N-terminal section; belongs to the DEFL family. Post-translationally, the mature protein extracted from the plant exhibits an average rate of 76% of hydroxyprolines. In terms of processing, O-glycosylated. O-linkage of 3 galactoses plus 9-16 or 21-23 arabinose residues attached on one or two hydroxyprolines.

It is found in the secreted. This chain is Major pollen allergen Art v 1, found in Artemisia vulgaris (Mugwort).